The sequence spans 247 residues: PHD finger protein ALFIN-LIKE 3 (247 aa).

The interval 147-178 is disordered; sequence DRSGVDSSGKSKHSTKRTGEGQVKRSRVVAEE. The PHD-type zinc-finger motif lies at 188 to 240; the sequence is ETFCGTCGGLYNANEFWIGCDICERWFHGKCVRITPAKAEHIKHYKCPDCSSS.

This sequence belongs to the Alfin family. In terms of assembly, interacts with H3K4me3 and to a lesser extent with H3K4me2.

Its subcellular location is the nucleus. In terms of biological role, histone-binding component that specifically recognizes H3 tails trimethylated on 'Lys-4' (H3K4me3), which mark transcription start sites of virtually all active genes. In Oryza sativa subsp. indica (Rice), this protein is PHD finger protein ALFIN-LIKE 3.